A 305-amino-acid polypeptide reads, in one-letter code: 2-pyrone-4,6-dicarbaxylate hydrolase (305 aa).

Residues 32 to 34, Tyr50, Thr78, Arg125, Arg131, Tyr158, and His182 each bind substrate; that span reads HCH. The active-site Proton acceptor is the Asp258. Asn263 contacts substrate.

The protein belongs to the metallo-dependent hydrolases superfamily. PDC hydrolase family.

The enzyme catalyses 2-oxo-2H-pyran-4,6-dicarboxylate + H2O = (1E)-4-oxobut-1-ene-1,2,4-tricarboxylate + H(+). Its activity is regulated as follows. Strongly inhibited by 1 mM Zn(2+), Cu(2+), Mn(2+) and Co(2+) ions. Also inhibited by 5,5'-dithiobis(2-nitrobenzoic acid) (Ellman reagent) in vitro. Its function is as follows. Involved in the degradation of aromatic compounds via the protocatechuate 4,5-cleavage pathway. Catalyzes the hydrolysis of 2-pyrone-4,6-dicarboxylate (PDC) to oxalomesaconate (OMA). Also catalyzes the reverse reaction. In Comamonas testosteroni (Pseudomonas testosteroni), this protein is 2-pyrone-4,6-dicarbaxylate hydrolase.